Here is a 311-residue protein sequence, read N- to C-terminus: tRNA dimethylallyltransferase (311 aa).

An ATP-binding site is contributed by 9-16 (GPTAVGKT). Residue 11–16 (TAVGKT) coordinates substrate. The tract at residues 34-37 (DSMQ) is interaction with substrate tRNA.

It belongs to the IPP transferase family. As to quaternary structure, monomer. The cofactor is Mg(2+).

It catalyses the reaction adenosine(37) in tRNA + dimethylallyl diphosphate = N(6)-dimethylallyladenosine(37) in tRNA + diphosphate. Functionally, catalyzes the transfer of a dimethylallyl group onto the adenine at position 37 in tRNAs that read codons beginning with uridine, leading to the formation of N6-(dimethylallyl)adenosine (i(6)A). The sequence is that of tRNA dimethylallyltransferase from Clostridium botulinum (strain Loch Maree / Type A3).